Here is a 900-residue protein sequence, read N- to C-terminus: Alpha-actinin-3 (900 aa).

Methionine 1 bears the N-acetylmethionine mark. The tract at residues 1–26 is disordered; the sequence is MMMVMQPEGLGAGEGPFSGGGGGEYM. Residues 1–260 are actin-binding; it reads MMMVMQPEGL…IMTYVSCFYH (260 aa). Over residues 10–24 the composition is skewed to gly residues; the sequence is LGAGEGPFSGGGGGE. 2 Calponin-homology (CH) domains span residues 44-148 and 157-263; these read KQQR…LRFA and TSAK…HAFA. 4 Spectrin repeats span residues 287-397, 407-512, 522-633, and 643-746; these read KLME…WLLS, HLAE…ALER, QLQL…TLQE, and RLRR…EVEN. 2 EF-hand domains span residues 759–794 and 795–830; these read EQLN…MGYD and LGEV…ETAE. Ca(2+) is bound by residues aspartate 772, asparagine 776, methionine 778, aspartate 783, aspartate 808, and asparagine 810.

It belongs to the alpha-actinin family. As to quaternary structure, homodimer; antiparallel. Also forms heterodimers with ACTN2. Interacts with MYOZ1. As to expression, expression restricted to skeletal muscle fast (type 2) fibers (at protein level).

Functionally, F-actin cross-linking protein which is thought to anchor actin to a variety of intracellular structures. This is a bundling protein. This chain is Alpha-actinin-3 (Actn3), found in Mus musculus (Mouse).